The sequence spans 813 residues: Molybdenum cofactor sulfurase (813 aa).

The residue at position 228 (K228) is an N6-(pyridoxal phosphate)lysine. C391 is an active-site residue. Residues 625–670 (PSLRHAKAHMQKHQGPKRSAAIEKSSAHSFHDPPTPPDSDSENRKR) are disordered. A compositionally biased stretch (basic residues) spans 628–640 (RHAKAHMQKHQGP). Positions 648 to 812 (KSSAHSFHDP…IKVGDKVSIG (165 aa)) constitute an MOSC domain.

The protein belongs to the class-V pyridoxal-phosphate-dependent aminotransferase family. MOCOS subfamily. The cofactor is pyridoxal 5'-phosphate.

The catalysed reaction is Mo-molybdopterin + L-cysteine + AH2 = thio-Mo-molybdopterin + L-alanine + A + H2O. Its function is as follows. Sulfurates the molybdenum cofactor. Sulfation of molybdenum is essential for xanthine dehydrogenase (XDH) and aldehyde oxidase (ADO) enzymes in which molybdenum cofactor is liganded by 1 oxygen and 1 sulfur atom in active form. This is Molybdenum cofactor sulfurase from Botryotinia fuckeliana (strain B05.10) (Noble rot fungus).